A 182-amino-acid polypeptide reads, in one-letter code: Ribosome maturation factor RimM (182 aa).

One can recognise a PRC barrel domain in the interval 103–182 (EDDYYWKDLM…RVEVDWDPGF (80 aa)).

Belongs to the RimM family. Binds ribosomal protein uS19.

The protein localises to the cytoplasm. Functionally, an accessory protein needed during the final step in the assembly of 30S ribosomal subunit, possibly for assembly of the head region. Essential for efficient processing of 16S rRNA. May be needed both before and after RbfA during the maturation of 16S rRNA. It has affinity for free ribosomal 30S subunits but not for 70S ribosomes. This Yersinia pestis (strain Pestoides F) protein is Ribosome maturation factor RimM.